A 275-amino-acid polypeptide reads, in one-letter code: Elongation factor Ts (275 aa).

The tract at residues 76 to 79 (TDFV) is involved in Mg(2+) ion dislocation from EF-Tu.

The protein belongs to the EF-Ts family.

The protein resides in the cytoplasm. In terms of biological role, associates with the EF-Tu.GDP complex and induces the exchange of GDP to GTP. It remains bound to the aminoacyl-tRNA.EF-Tu.GTP complex up to the GTP hydrolysis stage on the ribosome. The chain is Elongation factor Ts from Corynebacterium diphtheriae (strain ATCC 700971 / NCTC 13129 / Biotype gravis).